Consider the following 397-residue polypeptide: Lysophospholipid transporter LplT (397 aa).

Over 1–17 (MSESVHTNTSLWSKGMK) the chain is Periplasmic. A helical transmembrane segment spans residues 18–38 (AVIVAQFLSAFGDNALLFATL). Residues 39–52 (ALLKAQFYPEWSQP) lie on the Cytoplasmic side of the membrane. The chain crosses the membrane as a helical span at residues 53–73 (ILQMVFVGAYILFAPFVGQVA). Residues 74–90 (DSFAKGRVMMFANGLKL) lie on the Periplasmic side of the membrane. A helical membrane pass occupies residues 91–111 (LGAASICFGINPFLGYTLVGV). Topologically, residues 112-144 (GAAAYSPAKYGILGELTTGSKLVKANGLMEAST) are cytoplasmic. The chain crosses the membrane as a helical span at residues 145 to 165 (IAAILLGSVAGGVLADWHVLV). A topological domain (periplasmic) is located at residue Ala-166. A helical transmembrane segment spans residues 167–187 (LAACALAYGGAVVANIYIPKL). Residues 188-226 (AAARPGQSWNLISMTRSFLNACTSLWRNGETRFSLVGTS) are Cytoplasmic-facing. Residues 227 to 247 (LFWGAGVTLRFLLVLWVPVAL) form a helical membrane-spanning segment. Residues 248-256 (GITDNATPT) lie on the Periplasmic side of the membrane. Residues 257–277 (YLNAMVAIGIVVGAGAAAKLV) traverse the membrane as a helical segment. Over 278–280 (TLE) the chain is Cytoplasmic. A helical membrane pass occupies residues 281-301 (TVSRCMPAGILIGVVVLIFSL). The Periplasmic portion of the chain corresponds to 302–304 (QHE). A helical membrane pass occupies residues 305–325 (LLPAYALLMLIGVLGGFFVVP). The Cytoplasmic portion of the chain corresponds to 326-343 (LNALLQERGKKSVGAGNA). The helical transmembrane segment at 344-364 (IAVQNLGENSAMLLMLGIYSL) threads the bilayer. The Periplasmic portion of the chain corresponds to 365-366 (AV). The chain crosses the membrane as a helical span at residues 367 to 387 (MVGIPVVPIGIGFGALFALAI). The Cytoplasmic portion of the chain corresponds to 388 to 397 (TALWIWQRRH).

The protein belongs to the major facilitator superfamily. LplT (TC 2.A.1.42) family.

Its subcellular location is the cell inner membrane. In terms of biological role, catalyzes the facilitated diffusion of 2-acyl-glycero-3-phosphoethanolamine (2-acyl-GPE) into the cell. This Escherichia coli O7:K1 (strain IAI39 / ExPEC) protein is Lysophospholipid transporter LplT.